Here is a 448-residue protein sequence, read N- to C-terminus: tRNA modification GTPase MnmE (448 aa).

(6S)-5-formyl-5,6,7,8-tetrahydrofolate-binding residues include Arg24, Glu81, and Lys120. The TrmE-type G domain maps to 216–373; the sequence is GLNVVLVGAP…LKRTLLCEAG (158 aa). Residue Asn226 coordinates K(+). GTP contacts are provided by residues 226 to 231, 245 to 251, and 270 to 273; these read NVGKSS, TDIAGTT, and DTAG. Ser230 is a Mg(2+) binding site. K(+) is bound by residues Thr245, Ile247, and Thr250. Thr251 provides a ligand contact to Mg(2+). Residue Lys448 coordinates (6S)-5-formyl-5,6,7,8-tetrahydrofolate.

This sequence belongs to the TRAFAC class TrmE-Era-EngA-EngB-Septin-like GTPase superfamily. TrmE GTPase family. As to quaternary structure, homodimer. Heterotetramer of two MnmE and two MnmG subunits. It depends on K(+) as a cofactor.

Its subcellular location is the cytoplasm. In terms of biological role, exhibits a very high intrinsic GTPase hydrolysis rate. Involved in the addition of a carboxymethylaminomethyl (cmnm) group at the wobble position (U34) of certain tRNAs, forming tRNA-cmnm(5)s(2)U34. This chain is tRNA modification GTPase MnmE, found in Neisseria gonorrhoeae (strain ATCC 700825 / FA 1090).